The primary structure comprises 469 residues: Arginine biosynthesis bifunctional protein ArgJ, mitochondrial (469 aa).

6 residues coordinate substrate: Thr199, Lys228, Thr239, Glu325, Asn464, and Thr469. Thr239 (nucleophile) is an active-site residue.

It belongs to the ArgJ family. Heterodimer of an alpha and a beta chain. The alpha and beta chains are autoproteolytically processed from a single precursor protein within the mitochondrion.

The protein resides in the mitochondrion matrix. It carries out the reaction N(2)-acetyl-L-ornithine + L-glutamate = N-acetyl-L-glutamate + L-ornithine. The catalysed reaction is L-glutamate + acetyl-CoA = N-acetyl-L-glutamate + CoA + H(+). The protein operates within amino-acid biosynthesis; L-arginine biosynthesis; L-ornithine and N-acetyl-L-glutamate from L-glutamate and N(2)-acetyl-L-ornithine (cyclic): step 1/1. It functions in the pathway amino-acid biosynthesis; L-arginine biosynthesis; N(2)-acetyl-L-ornithine from L-glutamate: step 1/4. Functionally, catalyzes two activities which are involved in the cyclic version of arginine biosynthesis: the synthesis of acetylglutamate from glutamate and acetyl-CoA, and of ornithine by transacetylation between acetylornithine and glutamate. This chain is Arginine biosynthesis bifunctional protein ArgJ, mitochondrial, found in Neurospora crassa (strain ATCC 24698 / 74-OR23-1A / CBS 708.71 / DSM 1257 / FGSC 987).